A 212-amino-acid polypeptide reads, in one-letter code: Adenylate kinase (212 aa).

10 to 15 (GAGKGT) provides a ligand contact to ATP. Residues 30-59 (STGDMFRAAMANQTEMGVLAKSYIDKGELV) form an NMP region. AMP-binding positions include Thr-31, Arg-36, 57 to 59 (ELV), 86 to 89 (GYPR), and Gln-93. The tract at residues 127-159 (GRIIHRVTGETFHKVFNPPVDYKEEDYYQREDD) is LID. ATP contacts are provided by residues Arg-128 and 137–138 (TF). AMP-binding residues include Arg-156 and Arg-167. ATP is bound at residue Gln-195.

Belongs to the adenylate kinase family. As to quaternary structure, monomer.

The protein resides in the cytoplasm. It catalyses the reaction AMP + ATP = 2 ADP. The protein operates within purine metabolism; AMP biosynthesis via salvage pathway; AMP from ADP: step 1/1. Catalyzes the reversible transfer of the terminal phosphate group between ATP and AMP. Plays an important role in cellular energy homeostasis and in adenine nucleotide metabolism. The polypeptide is Adenylate kinase (Streptococcus pneumoniae (strain JJA)).